A 99-amino-acid chain; its full sequence is Large ribosomal subunit protein bL27 (99 aa).

Residues 1 to 10 constitute a propeptide that is removed on maturation; sequence MKLIFDIQLF.

Belongs to the bacterial ribosomal protein bL27 family. In terms of processing, the N-terminus is cleaved by ribosomal processing cysteine protease Prp.

The sequence is that of Large ribosomal subunit protein bL27 from Caldicellulosiruptor saccharolyticus (strain ATCC 43494 / DSM 8903 / Tp8T 6331).